The primary structure comprises 416 residues: Tryptophan synthase beta chain (416 aa).

At Lys109 the chain carries N6-(pyridoxal phosphate)lysine.

Belongs to the TrpB family. As to quaternary structure, tetramer of two alpha and two beta chains. Requires pyridoxal 5'-phosphate as cofactor.

It carries out the reaction (1S,2R)-1-C-(indol-3-yl)glycerol 3-phosphate + L-serine = D-glyceraldehyde 3-phosphate + L-tryptophan + H2O. The protein operates within amino-acid biosynthesis; L-tryptophan biosynthesis; L-tryptophan from chorismate: step 5/5. Functionally, the beta subunit is responsible for the synthesis of L-tryptophan from indole and L-serine. This Synechococcus sp. (strain WH7803) protein is Tryptophan synthase beta chain.